The sequence spans 177 residues: MTLNLAAKKAVVEEVTAVASKAISAVVADYRGLTVNQMTQLRSEARKSGVYLRVVRNTLTRRALKNTEFECLNDLLVGPVFIALSLEAPSDAARLLKDYAKTFEKLEIRALSVGGKVYNANQIDAVASLPTRDEAISKLMYVMKAPIEKFVRTLAEPHAKLARTLAAVKDKKAGNPA.

The protein belongs to the universal ribosomal protein uL10 family. In terms of assembly, part of the ribosomal stalk of the 50S ribosomal subunit. The N-terminus interacts with L11 and the large rRNA to form the base of the stalk. The C-terminus forms an elongated spine to which L12 dimers bind in a sequential fashion forming a multimeric L10(L12)X complex.

In terms of biological role, forms part of the ribosomal stalk, playing a central role in the interaction of the ribosome with GTP-bound translation factors. The polypeptide is Large ribosomal subunit protein uL10 (Legionella pneumophila (strain Corby)).